The following is a 192-amino-acid chain: Peptidyl-tRNA hydrolase (192 aa).

Tyrosine 14 is a binding site for tRNA. Histidine 19 serves as the catalytic Proton acceptor. 2 residues coordinate tRNA: tyrosine 66 and asparagine 68.

This sequence belongs to the PTH family. As to quaternary structure, monomer.

It localises to the cytoplasm. The catalysed reaction is an N-acyl-L-alpha-aminoacyl-tRNA + H2O = an N-acyl-L-amino acid + a tRNA + H(+). In terms of biological role, hydrolyzes ribosome-free peptidyl-tRNAs (with 1 or more amino acids incorporated), which drop off the ribosome during protein synthesis, or as a result of ribosome stalling. Functionally, catalyzes the release of premature peptidyl moieties from peptidyl-tRNA molecules trapped in stalled 50S ribosomal subunits, and thus maintains levels of free tRNAs and 50S ribosomes. In Coprothermobacter proteolyticus (strain ATCC 35245 / DSM 5265 / OCM 4 / BT), this protein is Peptidyl-tRNA hydrolase.